The sequence spans 355 residues: Ubiquinone biosynthesis protein COQ4 homolog, mitochondrial (355 aa).

4 residues coordinate Zn(2+): His134, Asp135, His138, and Glu150.

This sequence belongs to the COQ4 family. In terms of assembly, component of a multi-subunit COQ enzyme complex. It depends on Zn(2+) as a cofactor.

The protein localises to the mitochondrion inner membrane. The enzyme catalyses a 4-hydroxy-3-methoxy-5-(all-trans-polyprenyl)benzoate + H(+) = a 2-methoxy-6-(all-trans-polyprenyl)phenol + CO2. Its pathway is cofactor biosynthesis; ubiquinone biosynthesis. Functionally, lyase that catalyzes the C1-decarboxylation of 4-hydroxy-3-methoxy-5-(all-trans-polyprenyl)benzoic acid into 2-methoxy-6-(all-trans-polyprenyl)phenol during ubiquinone biosynthesis. The sequence is that of Ubiquinone biosynthesis protein COQ4 homolog, mitochondrial from Plasmodium falciparum (isolate 3D7).